We begin with the raw amino-acid sequence, 357 residues long: Isopentenyl-diphosphate delta-isomerase (357 aa).

6–7 (RK) provides a ligand contact to substrate. Residues Ser-62, 63 to 65 (AMT), Ser-93, and Asn-122 each bind FMN. 93–95 (SQR) contacts substrate. Gln-156 is a binding site for substrate. Glu-157 contacts Mg(2+). FMN-binding positions include Lys-186, Thr-216, 267–269 (GVR), and 288–289 (AL).

It belongs to the IPP isomerase type 2 family. In terms of assembly, homooctamer. Dimer of tetramers. The cofactor is FMN. NADPH is required as a cofactor. It depends on Mg(2+) as a cofactor.

It is found in the cytoplasm. The enzyme catalyses isopentenyl diphosphate = dimethylallyl diphosphate. Functionally, involved in the biosynthesis of isoprenoids. Catalyzes the 1,3-allylic rearrangement of the homoallylic substrate isopentenyl (IPP) to its allylic isomer, dimethylallyl diphosphate (DMAPP). The protein is Isopentenyl-diphosphate delta-isomerase of Methanothrix thermoacetophila (strain DSM 6194 / JCM 14653 / NBRC 101360 / PT) (Methanosaeta thermophila).